A 267-amino-acid polypeptide reads, in one-letter code: Diacetylchitobiose deacetylase (267 aa).

The protein belongs to the PIGL family. Homohexamer.

It localises to the cytoplasm. The enzyme catalyses N,N'-diacetylchitobiose + H2O = beta-D-glucosaminyl-(1-&gt;4)-N-acetyl-D-glucosamine + acetate. The protein operates within glycan degradation; chitin degradation. Functionally, deacylates the non-reducing end of diacetylchitobiose (GlcNAc2). Can also use N-acetylglucosamine (GlcNAc) and N-acetylchitotriose (GlcNAc3). Probably involved in chitin degradation. This chain is Diacetylchitobiose deacetylase (dac), found in Thermococcus kodakarensis (strain ATCC BAA-918 / JCM 12380 / KOD1) (Pyrococcus kodakaraensis (strain KOD1)).